Reading from the N-terminus, the 557-residue chain is Dihydroxy-acid dehydratase (557 aa).

Cys-47 is a [2Fe-2S] cluster binding site. Residue Asp-79 coordinates Mg(2+). Cys-120 provides a ligand contact to [2Fe-2S] cluster. Mg(2+) is bound by residues Asp-121 and Lys-122. Residue Lys-122 is modified to N6-carboxylysine. [2Fe-2S] cluster is bound at residue Cys-192. Position 444 (Glu-444) interacts with Mg(2+). Catalysis depends on Ser-470, which acts as the Proton acceptor.

Belongs to the IlvD/Edd family. Homodimer. The cofactor is [2Fe-2S] cluster. Mg(2+) is required as a cofactor.

The catalysed reaction is (2R)-2,3-dihydroxy-3-methylbutanoate = 3-methyl-2-oxobutanoate + H2O. The enzyme catalyses (2R,3R)-2,3-dihydroxy-3-methylpentanoate = (S)-3-methyl-2-oxopentanoate + H2O. It functions in the pathway amino-acid biosynthesis; L-isoleucine biosynthesis; L-isoleucine from 2-oxobutanoate: step 3/4. It participates in amino-acid biosynthesis; L-valine biosynthesis; L-valine from pyruvate: step 3/4. Its function is as follows. Functions in the biosynthesis of branched-chain amino acids. Catalyzes the dehydration of (2R,3R)-2,3-dihydroxy-3-methylpentanoate (2,3-dihydroxy-3-methylvalerate) into 2-oxo-3-methylpentanoate (2-oxo-3-methylvalerate) and of (2R)-2,3-dihydroxy-3-methylbutanoate (2,3-dihydroxyisovalerate) into 2-oxo-3-methylbutanoate (2-oxoisovalerate), the penultimate precursor to L-isoleucine and L-valine, respectively. The protein is Dihydroxy-acid dehydratase of Synechococcus sp. (strain CC9902).